Here is a 410-residue protein sequence, read N- to C-terminus: Peptidase T (410 aa).

His-78 contributes to the Zn(2+) binding site. Asp-80 is an active-site residue. Residue Asp-140 participates in Zn(2+) binding. The active-site Proton acceptor is the Glu-174. Residues Glu-175, Asp-197, and His-379 each contribute to the Zn(2+) site.

It belongs to the peptidase M20B family. The cofactor is Zn(2+).

It localises to the cytoplasm. It catalyses the reaction Release of the N-terminal residue from a tripeptide.. Cleaves the N-terminal amino acid of tripeptides. The polypeptide is Peptidase T (Vibrio cholerae serotype O1 (strain ATCC 39315 / El Tor Inaba N16961)).